The following is a 157-amino-acid chain: Transcription elongation factor GreA (157 aa).

Residues 12–74 adopt a coiled-coil conformation; it reads LKKLEEELEY…TLEAMLKNAK (63 aa).

It belongs to the GreA/GreB family.

In terms of biological role, necessary for efficient RNA polymerase transcription elongation past template-encoded arresting sites. The arresting sites in DNA have the property of trapping a certain fraction of elongating RNA polymerases that pass through, resulting in locked ternary complexes. Cleavage of the nascent transcript by cleavage factors such as GreA or GreB allows the resumption of elongation from the new 3'terminus. GreA releases sequences of 2 to 3 nucleotides. The chain is Transcription elongation factor GreA from Thermoanaerobacter pseudethanolicus (strain ATCC 33223 / 39E) (Clostridium thermohydrosulfuricum).